We begin with the raw amino-acid sequence, 478 residues long: Tubulin gamma chain (478 aa).

141 to 147 (AGGTGSG) contacts GTP. The tract at residues 451–478 (ISQKESSSLANENGNGANNKPGKSAMAL) is disordered. The segment covering 459–468 (LANENGNGAN) has biased composition (polar residues).

Belongs to the tubulin family.

It is found in the cytoplasm. It localises to the cytoskeleton. The protein localises to the microtubule organizing center. The protein resides in the centrosome. In terms of biological role, tubulin is the major constituent of microtubules. The gamma chain is found at microtubule organizing centers (MTOC) such as the spindle poles or the centrosome, suggesting that it is involved in the minus-end nucleation of microtubule assembly. This chain is Tubulin gamma chain, found in Reticulomyxa filosa.